A 263-amino-acid polypeptide reads, in one-letter code: 5'-nucleotidase SurE (263 aa).

4 residues coordinate a divalent metal cation: Asp-8, Asp-9, Ser-40, and Asn-98.

It belongs to the SurE nucleotidase family. A divalent metal cation serves as cofactor.

Its subcellular location is the cytoplasm. The catalysed reaction is a ribonucleoside 5'-phosphate + H2O = a ribonucleoside + phosphate. Nucleotidase that shows phosphatase activity on nucleoside 5'-monophosphates. This chain is 5'-nucleotidase SurE, found in Gloeobacter violaceus (strain ATCC 29082 / PCC 7421).